The following is a 157-amino-acid chain: Protein-export protein SecB (157 aa).

Belongs to the SecB family. As to quaternary structure, homotetramer, a dimer of dimers. One homotetramer interacts with 1 SecA dimer.

The protein localises to the cytoplasm. Functionally, one of the proteins required for the normal export of preproteins out of the cell cytoplasm. It is a molecular chaperone that binds to a subset of precursor proteins, maintaining them in a translocation-competent state. It also specifically binds to its receptor SecA. The chain is Protein-export protein SecB from Methylobacillus flagellatus (strain ATCC 51484 / DSM 6875 / VKM B-1610 / KT).